The primary structure comprises 104 residues: Interferon alpha-inducible protein 27-like protein 1 (104 aa).

Helical transmembrane passes span V14 to M34, G59 to L79, and V81 to P101.

Belongs to the IFI6/IFI27 family.

It is found in the membrane. Functionally, plays a role in the apoptotic process and has a pro-apoptotic activity. The sequence is that of Interferon alpha-inducible protein 27-like protein 1 from Homo sapiens (Human).